Reading from the N-terminus, the 673-residue chain is MSFSDSESSSHGGGGGDYKFFRQISRDRLLHEMLGSTKTGDSKAWKILIMDRVTVKVMSQSCKMADITDQGISLVEELFKRREPMPGMDAIYFIQPSKENIVMFLSDMSGREPLYRKAFIFFSSTIPKELVNHIKSDSSVLPRIGALREMNMEYFPIDNQGFLTDHEQALETLYAEDAENSRHFHICLNIMATRIATVFASLKELPFVRYRAAKSTASRDLVPSKLAAAIWDCISKYKAIPNFPQTETCELLIVDRSVDQIAPIIHEWTYDAMCHDLLDMEGNKHVIEVPSKTGGPPEKKEIVLEDHDPVWLELRHTHIADASERLHEKMTNFASKNKAAQMRSRDGSELSTRDLQKIVQALPQYGEQVDKLSTHVELAGKINRIIRDTGLRDLGQLEQDLVFGDAGAKDVINFLRTNQDTNPENKLRLLMIYATVYPEKFEGDKGVKLMQLARLSPVDMKVISNMQLIAGSPENKAKSGSFSLKFDAGKTKQANRKDRSGEEETWQLFRFYPMIEELLEKLVKGDLSKSDYLCMNQSSHKEESEARTGSVRKSSAPTAVPERKATPHSMRSRRTATWARPHSSDDGYSSDSVLKSASTEFKKLGQRIFVFIIGGATRSELRVCHKLTSSLRREVVLGSTSFDDPPQYITKLKLLSEKDIQGAPAQPFKPQYW.

The segment at 538-591 (SSHKEESEARTGSVRKSSAPTAVPERKATPHSMRSRRTATWARPHSSDDGYSSD) is disordered.

It belongs to the STXBP/unc-18/SEC1 family. As to quaternary structure, does not bind the syntaxin KNOLLE.

In terms of biological role, involved in the vesicle trafficking. Binds syntaxins. This Arabidopsis thaliana (Mouse-ear cress) protein is Protein transport Sec1a (SEC1A).